Reading from the N-terminus, the 285-residue chain is Bifunctional protein FolD (285 aa).

NADP(+) is bound by residues 163 to 165 (GRS) and Ser-188.

This sequence belongs to the tetrahydrofolate dehydrogenase/cyclohydrolase family. In terms of assembly, homodimer.

It carries out the reaction (6R)-5,10-methylene-5,6,7,8-tetrahydrofolate + NADP(+) = (6R)-5,10-methenyltetrahydrofolate + NADPH. It catalyses the reaction (6R)-5,10-methenyltetrahydrofolate + H2O = (6R)-10-formyltetrahydrofolate + H(+). It participates in one-carbon metabolism; tetrahydrofolate interconversion. In terms of biological role, catalyzes the oxidation of 5,10-methylenetetrahydrofolate to 5,10-methenyltetrahydrofolate and then the hydrolysis of 5,10-methenyltetrahydrofolate to 10-formyltetrahydrofolate. This chain is Bifunctional protein FolD, found in Lactococcus lactis subsp. cremoris (strain MG1363).